Reading from the N-terminus, the 198-residue chain is Ribonuclease HII (198 aa).

The RNase H type-2 domain occupies 10-198 (HLVAGVDEVG…PVKRALGLAS (189 aa)). The a divalent metal cation site is built by D16, E17, and D108.

This sequence belongs to the RNase HII family. The cofactor is Mn(2+). Requires Mg(2+) as cofactor.

It is found in the cytoplasm. The catalysed reaction is Endonucleolytic cleavage to 5'-phosphomonoester.. In terms of biological role, endonuclease that specifically degrades the RNA of RNA-DNA hybrids. This chain is Ribonuclease HII, found in Escherichia coli (strain ATCC 8739 / DSM 1576 / NBRC 3972 / NCIMB 8545 / WDCM 00012 / Crooks).